A 536-amino-acid chain; its full sequence is Light-independent protochlorophyllide reductase subunit B (536 aa).

Aspartate 36 is a [4Fe-4S] cluster binding site. Catalysis depends on aspartate 274, which acts as the Proton donor. Glycine 409–leucine 410 contacts substrate. The tract at residues aspartate 426–alanine 448 is disordered.

It belongs to the ChlB/BchB/BchZ family. In terms of assembly, protochlorophyllide reductase is composed of three subunits; BchL, BchN and BchB. Forms a heterotetramer of two BchB and two BchN subunits. Requires [4Fe-4S] cluster as cofactor.

It carries out the reaction chlorophyllide a + oxidized 2[4Fe-4S]-[ferredoxin] + 2 ADP + 2 phosphate = protochlorophyllide a + reduced 2[4Fe-4S]-[ferredoxin] + 2 ATP + 2 H2O. The protein operates within porphyrin-containing compound metabolism; bacteriochlorophyll biosynthesis (light-independent). Functionally, component of the dark-operative protochlorophyllide reductase (DPOR) that uses Mg-ATP and reduced ferredoxin to reduce ring D of protochlorophyllide (Pchlide) to form chlorophyllide a (Chlide). This reaction is light-independent. The NB-protein (BchN-BchB) is the catalytic component of the complex. The polypeptide is Light-independent protochlorophyllide reductase subunit B (Cereibacter sphaeroides (strain KD131 / KCTC 12085) (Rhodobacter sphaeroides)).